Here is a 265-residue protein sequence, read N- to C-terminus: Probable aquaporin TIP3-2 (265 aa).

Transmembrane regions (helical) follow at residues 32–52 and 62–82; these read LSEF…VYGL and LGGL…AVAV. The NPA 1 signature appears at 92 to 94; the sequence is NPA. Transmembrane regions (helical) follow at residues 110 to 130, 151 to 171, and 179 to 199; these read AALY…LLRL, ALLL…ATAV, and DIAP…GGPF. The short motif at 205–207 is the NPA 2 element; sequence NPA. The chain crosses the membrane as a helical span at residues 223 to 243; that stretch reads WVYWLGPLIGAGMAGALYEFV.

This sequence belongs to the MIP/aquaporin (TC 1.A.8) family. TIP (TC 1.A.8.10) subfamily. As to expression, expressed in leaves and at lower levels in roots.

Its subcellular location is the vacuole membrane. Its function is as follows. Aquaporins facilitate the transport of water and small neutral solutes across cell membranes. May be involved in transport from the vacuolar compartment to the cytoplasm. The chain is Probable aquaporin TIP3-2 (TIP3-2) from Oryza sativa subsp. japonica (Rice).